Consider the following 338-residue polypeptide: Ferredoxin--NADP reductase (338 aa).

D32, Q40, Y45, V85, F120, D287, and T327 together coordinate FAD.

The protein belongs to the ferredoxin--NADP reductase type 2 family. As to quaternary structure, homodimer. FAD is required as a cofactor.

It catalyses the reaction 2 reduced [2Fe-2S]-[ferredoxin] + NADP(+) + H(+) = 2 oxidized [2Fe-2S]-[ferredoxin] + NADPH. The protein is Ferredoxin--NADP reductase of Wolbachia pipientis wMel.